A 491-amino-acid polypeptide reads, in one-letter code: Nicotinamide phosphoribosyltransferase (491 aa).

M1 is subject to N-acetylmethionine. The residue at position 188 (Y188) is a Phosphotyrosine. R196 lines the diphosphate pocket. Position 219 (D219) interacts with beta-nicotinamide D-ribonucleotide. H247 and R311 together coordinate diphosphate. Beta-nicotinamide D-ribonucleotide-binding positions include 311 to 313 (RPD), 353 to 354 (GD), G384, and R392. S472 carries the post-translational modification Phosphoserine.

The protein belongs to the NAPRTase family. Homodimer.

The protein localises to the nucleus. It localises to the cytoplasm. Its subcellular location is the secreted. The enzyme catalyses beta-nicotinamide D-ribonucleotide + diphosphate = 5-phospho-alpha-D-ribose 1-diphosphate + nicotinamide + H(+). It functions in the pathway cofactor biosynthesis; NAD(+) biosynthesis; nicotinamide D-ribonucleotide from 5-phospho-alpha-D-ribose 1-diphosphate and nicotinamide: step 1/1. Its function is as follows. Catalyzes the condensation of nicotinamide with 5-phosphoribosyl-1-pyrophosphate to yield nicotinamide mononucleotide, an intermediate in the biosynthesis of NAD. It is the rate limiting component in the mammalian NAD biosynthesis pathway. The secreted form behaves both as a cytokine with immunomodulating properties and an adipokine with anti-diabetic properties, it has no enzymatic activity, partly because of lack of activation by ATP, which has a low level in extracellular space and plasma. Plays a role in the modulation of circadian clock function. Plays a role in the modulation of circadian clock function. NAMPT-dependent oscillatory production of NAD regulates oscillation of clock target gene expression by releasing the core clock component: CLOCK-BMAL1 heterodimer from NAD-dependent SIRT1-mediated suppression. The polypeptide is Nicotinamide phosphoribosyltransferase (NAMPT) (Sus scrofa (Pig)).